The chain runs to 811 residues: MRFAQRPAMPERRSLPVLSLRDTVLFPGIATPITVGRLKTLRAVEAALRVEGEDKRIFAVAQRDAAEEPTASGLFSIGVIARITQVQRFGSGLQLVLYCERRAAAPRYTEVDGVIRAPVIELADLPLRPEEDGALEALSREVRERAVEYGRHRGAPEDVLKQFVGSMYGPAELVNHIAFYLDLPTPEKQALLEILSTEERMRSLALHLYRQIGIVETQEKIRTTVEEELGERQREIYLREQLRAIQKELGEEDDENAAARLEHKLQRANLPAEILQEARRDLARLRRMGRETSPEAQVLMTWLEWVADLPWSQRTDDHVDLDRARAILDEDHYGLGDVKDRVLEFLAVRKLRLEQARSEGERSRAISRGPILLFLGPPGTGKTSIAESIARALGRKYVRVSLGGARDEADIRGHRRTYVGAMPGRILQGIKRIGSKNPVIVLDEVDKLGASYQGDPGAALLEVLDPAQNDGFVDHYLGLPFDLSEVLFICTANFRETIPPPLFDRMEPALFAGYTEQEKHEIARKYLLPRQRKECGLREEQLRVTGTAIGGIISGYTREAGVRQLERTLGALARKAARRIAAGEIERAVVGADDDVKELLGRARMRLERRLQYDQPGVATGMYYTQMGGDIMHVEASVMPGKGDFVLTGQLGDVMKESGRAALSYARAHAAELGVPSDRLQRRDVHIHVPAGAVPKDGPSAGVTMAVALVSALSGRPVRSDIAMTGEITLRGTVLPIGGIKEKVLGAHRAGIFEILLPADNEADLDDLPAEVRSSLEFYLVNTLDEALARCLRLRSIRLEAPEEMPHARAS.

Positions 15–212 (LPVLSLRDTV…SLALHLYRQI (198 aa)) constitute a Lon N-terminal domain. 376–383 (GPPGTGKT) lines the ATP pocket. The Lon proteolytic domain maps to 613-794 (YDQPGVATGM…DEALARCLRL (182 aa)). Catalysis depends on residues serine 700 and lysine 743.

This sequence belongs to the peptidase S16 family. As to quaternary structure, homohexamer. Organized in a ring with a central cavity.

The protein resides in the cytoplasm. The enzyme catalyses Hydrolysis of proteins in presence of ATP.. ATP-dependent serine protease that mediates the selective degradation of mutant and abnormal proteins as well as certain short-lived regulatory proteins. Required for cellular homeostasis and for survival from DNA damage and developmental changes induced by stress. Degrades polypeptides processively to yield small peptide fragments that are 5 to 10 amino acids long. Binds to DNA in a double-stranded, site-specific manner. The polypeptide is Lon protease 1 (Sorangium cellulosum (strain So ce56) (Polyangium cellulosum (strain So ce56))).